The sequence spans 107 residues: Class I hydrophobin hgfI (107 aa).

A signal peptide spans 1-24 (MFSKLAIFATAAFAVLAAATPVRR). Cystine bridges form between Cys-27-Cys-88, Cys-34-Cys-82, Cys-35-Cys-68, and Cys-89-Cys-102.

Belongs to the fungal hydrophobin family. Self-assembles to form functional amyloid fibrils called rodlets with a length range 100-150 nm. Self-assembly into fibrillar rodlets occurs spontaneously at hydrophobic:hydrophilic interfaces and the rodlets further associate laterally to form amphipathic monolayers. Only weekly expressed in hyphae cultured in liquid medium.

It localises to the secreted. The protein resides in the cell wall. Its function is as follows. Aerial growth, conidiation, and dispersal of filamentous fungi in the environment rely upon a capability of their secreting small amphipathic proteins called hydrophobins (HPBs) with low sequence identity. Class I can self-assemble into an outermost layer of rodlet bundles on aerial cell surfaces, conferring cellular hydrophobicity that supports fungal growth, development and dispersal; whereas Class II form highly ordered films at water-air interfaces through intermolecular interactions but contribute nothing to the rodlet structure. HgfI is a class I hydrophobin that is involved in cell surface hydrophobicity and lowers the surface tension of water and change the nature of the surfaces to which it adsorbs. This is Class I hydrophobin hgfI from Grifola frondosa (Maitake).